The chain runs to 335 residues: Adenine deaminase (335 aa).

Zn(2+) contacts are provided by H14, H16, and H194. E197 functions as the Proton donor in the catalytic mechanism. Residue D275 coordinates Zn(2+). D276 is a binding site for substrate.

The protein belongs to the metallo-dependent hydrolases superfamily. Adenosine and AMP deaminases family. Adenine deaminase type 2 subfamily. It depends on Zn(2+) as a cofactor.

It catalyses the reaction adenine + H2O + H(+) = hypoxanthine + NH4(+). Functionally, catalyzes the hydrolytic deamination of adenine to hypoxanthine. Plays an important role in the purine salvage pathway and in nitrogen catabolism. This is Adenine deaminase from Chlorobium phaeobacteroides (strain BS1).